Here is a 189-residue protein sequence, read N- to C-terminus: Elongation factor P (189 aa).

N6-(3,6-diaminohexanoyl)-5-hydroxylysine is present on Lys35.

This sequence belongs to the elongation factor P family. In terms of processing, may be beta-lysylated on the epsilon-amino group of Lys-35 by the combined action of EpmA and EpmB, and then hydroxylated on the C5 position of the same residue by EpmC (if this protein is present). Lysylation is critical for the stimulatory effect of EF-P on peptide-bond formation. The lysylation moiety may extend toward the peptidyltransferase center and stabilize the terminal 3-CCA end of the tRNA. Hydroxylation of the C5 position on Lys-35 may allow additional potential stabilizing hydrogen-bond interactions with the P-tRNA.

It is found in the cytoplasm. Its pathway is protein biosynthesis; polypeptide chain elongation. Its function is as follows. Involved in peptide bond synthesis. Alleviates ribosome stalling that occurs when 3 or more consecutive Pro residues or the sequence PPG is present in a protein, possibly by augmenting the peptidyl transferase activity of the ribosome. Modification of Lys-35 is required for alleviation. This chain is Elongation factor P, found in Wigglesworthia glossinidia brevipalpis.